We begin with the raw amino-acid sequence, 602 residues long: Oligoendopeptidase F, chromosomal (602 aa).

Zn(2+) is bound at residue His-388. Glu-389 is an active-site residue. 2 residues coordinate Zn(2+): His-392 and His-395.

Belongs to the peptidase M3B family. Requires Zn(2+) as cofactor.

Functionally, hydrolyzes peptides containing between 7 and 17 amino acids with a rather wide specificity. In Lactococcus lactis subsp. cremoris (Streptococcus cremoris), this protein is Oligoendopeptidase F, chromosomal (pepF2).